Consider the following 79-residue polypeptide: Small ribosomal subunit protein bS21 (79 aa).

The interval 59–79 (RKKMQREGLLPMKPKPVVGVR) is disordered.

Belongs to the bacterial ribosomal protein bS21 family.

The chain is Small ribosomal subunit protein bS21 from Methylocella silvestris (strain DSM 15510 / CIP 108128 / LMG 27833 / NCIMB 13906 / BL2).